Reading from the N-terminus, the 264-residue chain is Thiazole synthase (264 aa).

Residue Lys-106 is the Schiff-base intermediate with DXP of the active site. Residues Gly-167, 193–194, and 215–216 each bind 1-deoxy-D-xylulose 5-phosphate; these read AG and NT.

It belongs to the ThiG family. Homotetramer. Forms heterodimers with either ThiH or ThiS.

It is found in the cytoplasm. It catalyses the reaction [ThiS sulfur-carrier protein]-C-terminal-Gly-aminoethanethioate + 2-iminoacetate + 1-deoxy-D-xylulose 5-phosphate = [ThiS sulfur-carrier protein]-C-terminal Gly-Gly + 2-[(2R,5Z)-2-carboxy-4-methylthiazol-5(2H)-ylidene]ethyl phosphate + 2 H2O + H(+). Its pathway is cofactor biosynthesis; thiamine diphosphate biosynthesis. Functionally, catalyzes the rearrangement of 1-deoxy-D-xylulose 5-phosphate (DXP) to produce the thiazole phosphate moiety of thiamine. Sulfur is provided by the thiocarboxylate moiety of the carrier protein ThiS. In vitro, sulfur can be provided by H(2)S. This chain is Thiazole synthase, found in Xanthomonas campestris pv. campestris (strain 8004).